The primary structure comprises 829 residues: Periplasmic nitrate reductase (829 aa).

The segment at residues 1 to 30 (MKMTRRAFVKANAAASAAAVAGITLPASAA) is a signal peptide (tat-type signal). The 57-residue stretch at 41–97 (ITWDKAPCRFCGTGCSVLVGTQNGKVVATQGDPEAPVNKGLNCIKGYFLSKIMYGQD) folds into the 4Fe-4S Mo/W bis-MGD-type domain. 4 residues coordinate [4Fe-4S] cluster: Cys-48, Cys-51, Cys-55, and Cys-83. Mo-bis(molybdopterin guanine dinucleotide) is bound by residues Lys-85, Gln-152, Asn-177, Cys-181, 214-221 (WGSNMAEM), 245-249 (STYYH), 264-266 (QSD), Met-374, Gln-378, Asn-484, 510-511 (SD), Lys-533, Asp-560, and 718-727 (TGRVLEHWHT). Substrate is bound at residue Phe-794. Residues Asn-802 and Lys-819 each coordinate Mo-bis(molybdopterin guanine dinucleotide).

This sequence belongs to the prokaryotic molybdopterin-containing oxidoreductase family. NasA/NapA/NarB subfamily. As to quaternary structure, component of the periplasmic nitrate reductase NapAB complex composed of NapA and NapB. [4Fe-4S] cluster serves as cofactor. Mo-bis(molybdopterin guanine dinucleotide) is required as a cofactor. Post-translationally, predicted to be exported by the Tat system. The position of the signal peptide cleavage has not been experimentally proven.

The protein resides in the periplasm. It catalyses the reaction 2 Fe(II)-[cytochrome] + nitrate + 2 H(+) = 2 Fe(III)-[cytochrome] + nitrite + H2O. Catalytic subunit of the periplasmic nitrate reductase complex NapAB. Receives electrons from NapB and catalyzes the reduction of nitrate to nitrite. The chain is Periplasmic nitrate reductase from Vibrio vulnificus (strain CMCP6).